A 234-amino-acid polypeptide reads, in one-letter code: HTH-type transcriptional regulator ArcR (234 aa).

40-129 lines the a nucleoside 3',5'-cyclic phosphate pocket; that stretch reads VRHYTKGQVI…MAFLCKANDD (90 aa). Residues 155-228 form the HTH crp-type domain; that stretch reads KFAKDRIIKL…HKNWLVSKHL (74 aa). A DNA-binding region (H-T-H motif) is located at residues 188–207; that stretch reads IQLMSDMAGISRETAGHIIH.

Its subcellular location is the cytoplasm. In terms of biological role, positively regulates the expression of the arcABDCR operon under anaerobic conditions, thus playing an essential role in arginine catabolism. May also control the expression of genes encoding proteins which are involved in anaerobic metabolism. Can bind cyclic AMP. This chain is HTH-type transcriptional regulator ArcR (arcR), found in Staphylococcus aureus (strain MSSA476).